Consider the following 328-residue polypeptide: Probable ABC transporter permease YtrC (328 aa).

8 helical membrane-spanning segments follow: residues 16-36 (VVIL…IVNT), 60-80 (ISNL…CFLG), 110-130 (GFVI…LILV), 144-164 (IGVI…GALT), 167-187 (AFAQ…IIAL), 236-256 (YLLL…FISF), 277-297 (VQIL…YYTG), and 300-320 (IIGY…VSYF).

Belongs to the ABC-5 integral membrane protein family. In terms of assembly, the complex is composed of 2 ATP-binding proteins (YtrB and YtrE), 2 transmembrane proteins (YtrC and YtrD) and a solute-binding protein (YtrF).

The protein localises to the cell membrane. Its function is as follows. Part of the ABC transporter complex YtrBCDEF that plays a role in acetoin utilization during stationary phase and sporulation. The protein is Probable ABC transporter permease YtrC (ytrC) of Bacillus subtilis (strain 168).